The chain runs to 212 residues: ATP synthase subunit 5, mitochondrial (212 aa).

The transit peptide at 1-17 (MFNRVFTRSFASSLRAA) directs the protein to the mitochondrion.

It belongs to the ATPase delta chain family. As to quaternary structure, F-type ATPases have 2 components, CF(1) - the catalytic core - and CF(0) - the membrane proton channel. CF(1) has five subunits: alpha(3), beta(3), gamma(1), delta(1), epsilon(1). CF(0) has three main subunits: a, b and c.

Its subcellular location is the mitochondrion. The protein resides in the mitochondrion inner membrane. Its function is as follows. Mitochondrial membrane ATP synthase (F(1)F(0) ATP synthase or Complex V) produces ATP from ADP in the presence of a proton gradient across the membrane which is generated by electron transport complexes of the respiratory chain. F-type ATPases consist of two structural domains, F(1) - containing the extramembraneous catalytic core and F(0) - containing the membrane proton channel, linked together by a central stalk and a peripheral stalk. During catalysis, ATP synthesis in the catalytic domain of F(1) is coupled via a rotary mechanism of the central stalk subunits to proton translocation. Part of the complex F(0) domain and the peripheric stalk, which acts as a stator to hold the catalytic alpha(3)beta(3) subcomplex and subunit a/ATP6 static relative to the rotary elements. In Saccharomyces cerevisiae (strain ATCC 204508 / S288c) (Baker's yeast), this protein is ATP synthase subunit 5, mitochondrial (ATP5).